A 41-amino-acid polypeptide reads, in one-letter code: Large ribosomal subunit protein bL36 (41 aa).

This sequence belongs to the bacterial ribosomal protein bL36 family.

In Sphingopyxis alaskensis (strain DSM 13593 / LMG 18877 / RB2256) (Sphingomonas alaskensis), this protein is Large ribosomal subunit protein bL36.